Consider the following 46-residue polypeptide: Mu-segestritoxin-Sf1h (46 aa).

4 cysteine pairs are disulfide-bonded: cysteine 3-cysteine 19, cysteine 10-cysteine 22, cysteine 18-cysteine 42, and cysteine 24-cysteine 40. The tract at residues 31-33 (RPW) is keys region for toxin activity.

The protein belongs to the neurotoxin 16 (SFI) family. Expressed by the venom gland.

It localises to the secreted. In terms of biological role, insecticidal toxin. It inhibits insect voltage-gated sodium channels (Nav) by partially blocking the channel pore in DUM neurons from the American cockroach, not by acting as a gating modifier. The inhibition is only partially reversible after prolonged washout. In vivo, the toxin causes flaccid paralysis followed by death when injected into Heliothis virescens larvae. It also causes uncoordinated movements followed by full paralysis to sheep blowflies (Lucilia cuprina). When the toxin is fused to snowdrop lectin, it is orally active against larvae of the tomato moth (Laconobia oleracea), the rice brown planthopper (Nilaparvata lugens), and the peach-potato aphid (Myzus persicae). This Segestria florentina (Tube-web spider) protein is Mu-segestritoxin-Sf1h.